A 400-amino-acid polypeptide reads, in one-letter code: Acetate kinase (400 aa).

N7 provides a ligand contact to Mg(2+). Position 14 (K14) interacts with ATP. R85 contacts substrate. The active-site Proton donor/acceptor is the D142. ATP contacts are provided by residues H202–G206, D278–R280, and G326–N330. A Mg(2+)-binding site is contributed by E380.

The protein belongs to the acetokinase family. As to quaternary structure, homodimer. It depends on Mg(2+) as a cofactor. The cofactor is Mn(2+).

The protein resides in the cytoplasm. The catalysed reaction is acetate + ATP = acetyl phosphate + ADP. It functions in the pathway metabolic intermediate biosynthesis; acetyl-CoA biosynthesis; acetyl-CoA from acetate: step 1/2. Catalyzes the formation of acetyl phosphate from acetate and ATP. Can also catalyze the reverse reaction. This Deinococcus deserti (strain DSM 17065 / CIP 109153 / LMG 22923 / VCD115) protein is Acetate kinase.